The following is an 810-amino-acid chain: Chloride channel protein (810 aa).

Over 2-48 the chain is Cytoplasmic; the sequence is SHEKNEASGNPEAQSWKAQEAMLGVKTEVSRWRAVKNCLYRHLVKVL. Transmembrane regions (helical) follow at residues 49 to 86 and 93 to 116; these read GEDWIFLLLLGALMALVSWAMDFIGSRGLRFYKYLFAM and LQYLVWVCYPLILILFSSLFCQIV. The Selectivity filter part_1 signature appears at 122–126; sequence GSGIP. Residue Ser123 participates in chloride binding. An intramembrane region (helical) is located at residues 125–132; it reads IPELKTII. 2 helical membrane passes run 141 to 160 and 166 to 184; these read LTLRTFVAKTVGLTVALSAG and EGPFVHIASICATLLNQLL. The short motif at 164–168 is the Selectivity filter part_2 element; sequence GKEGP. 2 consecutive intramembrane regions (helical) follow at residues 201-213 and 217-225; these read ILTVGCALGISCC and PLAGVLFSI. The next 3 membrane-spanning stretches (helical) occupy residues 237-254, 283-311, and 320-339; these read YWRGFLGGAFSAFIFRVL, LPAFAIIGIASGFFGALFVYLNRQIIVFM, and ILKKQRLIYPAVVTFVLATL. N-linked (GlcNAc...) asparagine glycosylation occurs at Asn365. A run of 2 helical transmembrane segments spans residues 389–408 and 416–439; these read NIFIVMALYFVMHFWMAALA and GAFVPVFNLGAVLGRFVGELMALL. Positions 416 to 420 match the Selectivity filter part_3 motif; that stretch reads GAFVP. A chloride-binding site is contributed by Phe418. Positions 456–470 form an intramembrane region, helical; sequence GEYAVIGAAAMTGAV. Positions 471-472 form an intramembrane region, note=Loop between two helices; sequence TH. Residues 473–484 constitute an intramembrane region (helical); it reads AVSTAVICFELT. An intramembrane region (note=Loop between two helices) is located at residues 485 to 489; that stretch reads GQISH. The chain crosses the membrane as a helical span at residues 490–506; the sequence is VLPMMVAVILANMVAQG. At 507–810 the chain is on the cytoplasmic side; it reads LQPSLYDSII…RTATSNSSGK (304 aa). Tyr512 contacts chloride. Residues 543 to 601 enclose the CBS 1 domain; that stretch reads MVRDVTSIASTSTYGDLLHVLRQTKLKFFPFVDTPETNTLLGSIERTEVEGLLQRRISA. 2 disordered regions span residues 604-631 and 658-688; these read RQPATAAEAEEEGRNGERGASFTGDVPG and KVQTEDPRPPSPVPAEEPTQTSGIYQKKHKG. A CBS 2 domain is found at 724 to 781; that stretch reads IDQSPFQLVEGTSLQKTHTLFSLLGLDRAYVTSMGKLVGVVALAEIQAAIEGSYQKGF.

Belongs to the chloride channel (TC 2.A.49) family. ClC-0 subfamily. Homodimer. Each subunit has channel activity ('Double barreled channel').

Its subcellular location is the membrane. In terms of biological role, voltage-gated chloride channel. This channel is thought to ensure the high conductance of the non-innervated membrane of the electrocyte necessary for efficient current generation caused by sodium influx through the acetylcholine receptor at the innervated membrane. The protein is Chloride channel protein of Tetronarce californica (Pacific electric ray).